The following is a 400-amino-acid chain: Serine/threonine transporter SstT (400 aa).

9 consecutive transmembrane segments (helical) span residues 14–34, 48–68, 76–96, 136–156, 177–197, 211–231, 285–305, 311–331, and 349–371; these read IIIA…VTPY, SVAP…FQVG, VLLL…IASL, AISE…GLAM, IIHK…AVTF, LLAV…PILV, IPLG…VLTL, LGIH…TISA, and CSLF…IISV.

It belongs to the dicarboxylate/amino acid:cation symporter (DAACS) (TC 2.A.23) family.

It is found in the cell inner membrane. It carries out the reaction L-serine(in) + Na(+)(in) = L-serine(out) + Na(+)(out). The catalysed reaction is L-threonine(in) + Na(+)(in) = L-threonine(out) + Na(+)(out). Its function is as follows. Involved in the import of serine and threonine into the cell, with the concomitant import of sodium (symport system). The polypeptide is Serine/threonine transporter SstT (Acinetobacter baumannii (strain ATCC 17978 / DSM 105126 / CIP 53.77 / LMG 1025 / NCDC KC755 / 5377)).